The chain runs to 374 residues: UDP-N-acetylglucosamine--N-acetylmuramyl-(pentapeptide) pyrophosphoryl-undecaprenol N-acetylglucosamine transferase (374 aa).

UDP-N-acetyl-alpha-D-glucosamine contacts are provided by residues 13–15 (TGG), N124, R165, S193, and Q294.

Belongs to the glycosyltransferase 28 family. MurG subfamily.

It localises to the cell inner membrane. The enzyme catalyses di-trans,octa-cis-undecaprenyl diphospho-N-acetyl-alpha-D-muramoyl-L-alanyl-D-glutamyl-meso-2,6-diaminopimeloyl-D-alanyl-D-alanine + UDP-N-acetyl-alpha-D-glucosamine = di-trans,octa-cis-undecaprenyl diphospho-[N-acetyl-alpha-D-glucosaminyl-(1-&gt;4)]-N-acetyl-alpha-D-muramoyl-L-alanyl-D-glutamyl-meso-2,6-diaminopimeloyl-D-alanyl-D-alanine + UDP + H(+). Its pathway is cell wall biogenesis; peptidoglycan biosynthesis. Its function is as follows. Cell wall formation. Catalyzes the transfer of a GlcNAc subunit on undecaprenyl-pyrophosphoryl-MurNAc-pentapeptide (lipid intermediate I) to form undecaprenyl-pyrophosphoryl-MurNAc-(pentapeptide)GlcNAc (lipid intermediate II). This is UDP-N-acetylglucosamine--N-acetylmuramyl-(pentapeptide) pyrophosphoryl-undecaprenol N-acetylglucosamine transferase from Rhizobium johnstonii (strain DSM 114642 / LMG 32736 / 3841) (Rhizobium leguminosarum bv. viciae).